The primary structure comprises 484 residues: Probable cytochrome P450 316a1 (484 aa).

Cysteine 433 provides a ligand contact to heme.

Belongs to the cytochrome P450 family. Heme serves as cofactor.

It is found in the endoplasmic reticulum membrane. The protein resides in the microsome membrane. In terms of biological role, may be involved in the metabolism of insect hormones and in the breakdown of synthetic insecticides. This is Probable cytochrome P450 316a1 (Cyp316a1) from Drosophila melanogaster (Fruit fly).